A 207-amino-acid chain; its full sequence is Probable nicotinate-nucleotide adenylyltransferase (207 aa).

It belongs to the NadD family.

It carries out the reaction nicotinate beta-D-ribonucleotide + ATP + H(+) = deamido-NAD(+) + diphosphate. Its pathway is cofactor biosynthesis; NAD(+) biosynthesis; deamido-NAD(+) from nicotinate D-ribonucleotide: step 1/1. Catalyzes the reversible adenylation of nicotinate mononucleotide (NaMN) to nicotinic acid adenine dinucleotide (NaAD). This is Probable nicotinate-nucleotide adenylyltransferase from Synechococcus sp. (strain JA-3-3Ab) (Cyanobacteria bacterium Yellowstone A-Prime).